A 1462-amino-acid polypeptide reads, in one-letter code: uncharacterized protein (1462 aa).

A helical transmembrane segment spans residues 119–139; sequence TGYITSLCLSAILKFFSFRII. Phosphoserine is present on residues S411 and S420. In terms of domain architecture, SEC7 spans 541-730; the sequence is TLIESKKRKA…SEIYKAIKEN (190 aa). The stretch at 1102 to 1139 is one HEAT repeat; that stretch reads ENSEDWGLFSKLCNLLNDKNIVVRNQSLSLFHQLVNKY.

The protein localises to the cytoplasm. It localises to the golgi apparatus membrane. This is an uncharacterized protein from Schizosaccharomyces pombe (strain 972 / ATCC 24843) (Fission yeast).